We begin with the raw amino-acid sequence, 194 residues long: Protein A43 (194 aa).

The signal sequence occupies residues 1–22 (MMMMKWIISILTMSIMPVLAYS). Over 23 to 165 (SSIFRFHSED…YKDINDKYND (143 aa)) the chain is Extracellular. Asn65 and Asn114 each carry an N-linked (GlcNAc...) asparagine; by host glycan. A helical transmembrane segment spans residues 166 to 186 (IYDFTAICMLIASTLIVTIYV). Over 187 to 194 (FKKIKMNS) the chain is Cytoplasmic.

The protein belongs to the orthopoxvirus OPG172 protein family.

It is found in the host membrane. The protein resides in the host cell surface. The chain is Protein A43 (OPG172) from Homo sapiens (Human).